Consider the following 758-residue polypeptide: Aspartyl/asparaginyl beta-hydroxylase (758 aa).

The tract at residues 1 to 46 is disordered; it reads MAQRKNAKSSGNSSSSGSGSGSTSAGSSSPGARRETKHGGHKNGRK. The Cytoplasmic segment spans residues 1–53; that stretch reads MAQRKNAKSSGNSSSSGSGSGSTSAGSSSPGARRETKHGGHKNGRKGGLSGTS. Residues 9–31 are compositionally biased toward low complexity; sequence SSGNSSSSGSGSGSTSAGSSSPG. Position 14 is a phosphoserine (S14). A helical; Signal-anchor for type II membrane protein transmembrane segment spans residues 54 to 74; the sequence is FFTWFMVIALLGVWTSVAVVW. Residue L64 is glycosylated (N-linked (GlcNAc...) asparagine). Over 75–758 the chain is Lumenal; sequence FDLVDYEEVL…PQQRRSLPAI (684 aa). D91, D93, D95, D97, and D102 together coordinate Ca(2+). Disordered regions lie at residues 111–140 and 304–324; these read ERST…EAEP and EEQQ…EQKA. Basic and acidic residues predominate over residues 313 to 324; the sequence is TNRKTDDPEQKA. The TPR 1 repeat unit spans residues 341–374; sequence IKAELDAAEKLRKRGKIEEAVNAFKELVRKYPQS. An N-linked (GlcNAc...) asparagine glycan is attached at N452. 3 TPR repeats span residues 454–487, 489–521, and 525–557; these read TSLK…TPND, FAKV…GDPG, and GRFY…GHFA. W625 contacts 2-oxoglutarate. C641 and C648 are oxidised to a cystine. S668 is a binding site for 2-oxoglutarate. Residue H679 participates in Fe cation binding. Position 688 to 690 (688 to 690) interacts with 2-oxoglutarate; it reads RMH. N-linked (GlcNAc...) asparagine glycosylation occurs at N706. H725 is a binding site for Fe cation. R735 is a 2-oxoglutarate binding site.

This sequence belongs to the aspartyl/asparaginyl beta-hydroxylase family. As to quaternary structure, monomer. Isoform 8 interacts with ORAI1 and STIM1. Isoform 4 interacts with CASQ2. Requires Fe cation as cofactor. Isoform 1 is detected in all tissues tested. Isoform 8 is mainly expressed in pancreas, heart, brain, kidney and liver. Isoform 8 is expressed in kidney (at protein level).

Its subcellular location is the endoplasmic reticulum membrane. It is found in the sarcoplasmic reticulum membrane. The catalysed reaction is L-aspartyl-[protein] + 2-oxoglutarate + O2 = 3-hydroxy-L-aspartyl-[protein] + succinate + CO2. Specifically hydroxylates an Asp or Asn residue in certain epidermal growth factor-like (EGF) domains of a number of proteins. In terms of biological role, membrane-bound Ca(2+)-sensing protein, which is a structural component of the ER-plasma membrane junctions. Isoform 8 regulates the activity of Ca(+2) released-activated Ca(+2) (CRAC) channels in T-cells. This Homo sapiens (Human) protein is Aspartyl/asparaginyl beta-hydroxylase (ASPH).